Reading from the N-terminus, the 260-residue chain is UPF0246 protein Mmwyl1_3597 (260 aa).

The protein belongs to the UPF0246 family.

This is UPF0246 protein Mmwyl1_3597 from Marinomonas sp. (strain MWYL1).